A 331-amino-acid chain; its full sequence is Pantothenate kinase (331 aa).

109–116 (GSVAVGKS) contacts ATP.

The protein belongs to the prokaryotic pantothenate kinase family.

Its subcellular location is the cytoplasm. It carries out the reaction (R)-pantothenate + ATP = (R)-4'-phosphopantothenate + ADP + H(+). Its pathway is cofactor biosynthesis; coenzyme A biosynthesis; CoA from (R)-pantothenate: step 1/5. The polypeptide is Pantothenate kinase (Rhizobium rhizogenes (strain K84 / ATCC BAA-868) (Agrobacterium radiobacter)).